Consider the following 118-residue polypeptide: NADH dehydrogenase [ubiquinone] iron-sulfur protein 5-A (118 aa).

One can recognise a CHCH domain in the interval 46 to 87 (KGRCYDFWMDFSECMSHCREPKDCTLLREDYLECLHHSKEFQ). 2 consecutive short sequence motifs (cx9C motif) follow at residues 49–59 (CYDFWMDFSEC) and 69–79 (CTLLREDYLEC). 2 cysteine pairs are disulfide-bonded: cysteine 49-cysteine 79 and cysteine 59-cysteine 69. Positions 98–118 (RKLRAASRKGEEAGDGTHNHH) are disordered.

It belongs to the complex I NDUFS5 subunit family. Complex I is composed of at least 49 different subunits. This is a component of the iron-sulfur (IP) fragment of the enzyme.

It is found in the mitochondrion. Its subcellular location is the mitochondrion inner membrane. The protein localises to the mitochondrion intermembrane space. Functionally, accessory subunit of the mitochondrial membrane respiratory chain NADH dehydrogenase (Complex I), that is believed not to be involved in catalysis. Complex I functions in the transfer of electrons from NADH to the respiratory chain. The immediate electron acceptor for the enzyme is believed to be ubiquinone. The chain is NADH dehydrogenase [ubiquinone] iron-sulfur protein 5-A from Arabidopsis thaliana (Mouse-ear cress).